Here is a 124-residue protein sequence, read N- to C-terminus: Urocortin (124 aa).

An N-terminal signal peptide occupies residues 1-25; sequence MRQAGRAALLAALLLLVQLCPGSSQ. The disordered stretch occupies residues 23 to 46; it reads SSQRSPEAAGVQDPSLRWSPGARN. Residues 26–82 constitute a propeptide that is removed on maturation; the sequence is RSPEAAGVQDPSLRWSPGARNQGGGARALLLLLAERFPRRAGPGRLGLGTAGERPRR. V122 is subject to Valine amide.

The protein belongs to the sauvagine/corticotropin-releasing factor/urotensin I family. Interacts with CRHR1 and CRHR2 (via their N-terminal extracellular domain). In terms of tissue distribution, keratinocytes in epidermis and the outer and inner root sheaths of hair follicles, epithelium of sebaceous and sweat glands, erector pili muscle, cutaneous blood vessel walls, cutaneous nerves and dermal mononuclear cells. Detected in plasma cells in the lamia propria in colon mucosa (at protein level). Expressed in pituitary and adrenal glands. Detected in plasma cells in the lamia propria in colon mucosa.

The protein resides in the secreted. In terms of biological role, acts in vitro to stimulate the secretion of adrenocorticotropic hormone (ACTH). Binds with high affinity to CRF receptor types 1, 2-alpha, and 2-beta. Plays a role in the establishment of normal hearing thresholds. Reduces food intake and regulates ghrelin levels in gastric body and plasma. The chain is Urocortin (UCN) from Homo sapiens (Human).